Reading from the N-terminus, the 138-residue chain is Probable lactoylglutathione lyase (138 aa).

The region spanning 5-129 is the VOC domain; the sequence is RILHTMLRVG…DGYMIELIQN (125 aa). Histidine 8 is a binding site for Ni(2+). Residue arginine 12 participates in substrate binding. Glutamate 59 is a Ni(2+) binding site. Substrate-binding residues include asparagine 63 and histidine 77. Ni(2+) is bound by residues histidine 77 and glutamate 125. Glutamate 125 functions as the Proton donor/acceptor in the catalytic mechanism.

The protein belongs to the glyoxalase I family. Ni(2+) is required as a cofactor.

It catalyses the reaction (R)-S-lactoylglutathione = methylglyoxal + glutathione. It participates in secondary metabolite metabolism; methylglyoxal degradation; (R)-lactate from methylglyoxal: step 1/2. Its function is as follows. Catalyzes the conversion of hemimercaptal, formed from methylglyoxal and glutathione, to S-lactoylglutathione. The chain is Probable lactoylglutathione lyase (gloA) from Vibrio cholerae serotype O1 (strain ATCC 39315 / El Tor Inaba N16961).